Here is a 173-residue protein sequence, read N- to C-terminus: Protein-export protein SecB (173 aa).

Residues Gln148 to Gln173 form a disordered region. The span at Thr158–Pro167 shows a compositional bias: polar residues.

This sequence belongs to the SecB family. As to quaternary structure, homotetramer, a dimer of dimers. One homotetramer interacts with 1 SecA dimer.

It is found in the cytoplasm. Its function is as follows. One of the proteins required for the normal export of preproteins out of the cell cytoplasm. It is a molecular chaperone that binds to a subset of precursor proteins, maintaining them in a translocation-competent state. It also specifically binds to its receptor SecA. The protein is Protein-export protein SecB of Halorhodospira halophila (strain DSM 244 / SL1) (Ectothiorhodospira halophila (strain DSM 244 / SL1)).